The following is a 532-amino-acid chain: Cytochrome P450 12b1, mitochondrial (532 aa).

A heme-binding site is contributed by cysteine 480.

This sequence belongs to the cytochrome P450 family. It depends on heme as a cofactor.

It is found in the mitochondrion. In terms of biological role, probably involved in steroid hormones biosynthesis. The polypeptide is Cytochrome P450 12b1, mitochondrial (Cyp12b1) (Drosophila acanthoptera (Fruit fly)).